Consider the following 618-residue polypeptide: MQRRFLSSISATAGNTKTLNQGRWSVKQVKKSNFHVTLDEIRTSIDSSDFIALSLQNTGSYAAAWHRVSAIDTPQTSYLKAKYAAERYQILQFALCPFSLQGSKLTVHPYNFHLFPRDELKCGMPSYSFSCQASRLTAMAREGFDFNICIYEGISYLSRAQESASKFLSENPILADSVTVSSSPATVADTVFVGRIRSRVKNWRQSCIDSGSKTGDDDLVSSLRRLVLGSEQYGSRLCLTIDVCSERQVQLILEMLTEFSDDVVPLLVASKSRGTQAVRTVFMSSKEDKDLFKRELKDLEKEENRRVRGFREVVDFISSSQKPVVSQNYLSDFTSIHAKFLGPLPSNVDDFSSSLSSAFPNVVDLSQFMKEISPLSNISNLPAAMSSLNRFFAPVDVEVANQGCPVKLDEGHQSHGQNAVMISQLFAKLCTIQKSDLSTIQSNEDFQALASDEHANSVTSCSKNAGDENVKVWSKNSRRVSSENLVFIWGLGKKMTAAKLKNVLQKSHPVFAREFDVKYIDRSSAILVFWESGPSETFLSAVNNEEQLDGSLREMVAEGLRGAGYETYKRACRLGFWEADLAESLDKALESSDTDPDSDTKPSEIDWSNELAINFDEL.

A divalent metal cation is bound by residues Ser54, Gln56, Asp332, and Asn418. The segment at 588-607 (ALESSDTDPDSDTKPSEIDW) is disordered.

Belongs to the CAF1 family. Requires a divalent metal cation as cofactor.

Its subcellular location is the nucleus. The protein localises to the cytoplasm. The catalysed reaction is Exonucleolytic cleavage of poly(A) to 5'-AMP.. 3'-exoribonuclease that has a preference for poly(A) tails of mRNAs, thereby efficiently degrading poly(A) tails. Exonucleolytic degradation of the poly(A) tail is often the first step in the decay of eukaryotic mRNAs. This is Poly(A)-specific ribonuclease PARN-like from Arabidopsis thaliana (Mouse-ear cress).